Here is a 132-residue protein sequence, read N- to C-terminus: Nuclear transition protein 2 (132 aa).

Polar residues predominate over residues 1–20 (MDTKTQSLPNTHAQPHSNSR). The segment at 1-132 (MDTKTQSLPN…KRQSSGRKYN (132 aa)) is disordered. Zn(2+) contacts are provided by His12, His16, His24, Cys29, Cys31, and Cys35. Residues 37–59 (SRSRSRSCRSRSSSRRPRSHRSP) show a composition bias toward basic residues. The segment covering 82–94 (SHQCPSRPVTHSC) has biased composition (polar residues). The Nuclear localization signal motif lies at 105 to 113 (GKVIKRKQV). The segment covering 108 to 132 (IKRKQVKRSKQVYKRKRQSSGRKYN) has biased composition (basic residues). Phosphoserine is present on Ser127.

This sequence belongs to the nuclear transition protein 2 family. Testis.

It is found in the nucleus. Its subcellular location is the nucleolus. The protein resides in the chromosome. In terms of biological role, plays a key role in the replacement of histones to protamine in the elongating spermatids of mammals. In condensing spermatids, loaded onto the nucleosomes, where it promotes the recruitment and processing of protamines, which are responsible for histone eviction. This is Nuclear transition protein 2 (TNP2) from Bos taurus (Bovine).